We begin with the raw amino-acid sequence, 271 residues long: Pyrroline-5-carboxylate reductase (271 aa).

This sequence belongs to the pyrroline-5-carboxylate reductase family.

It localises to the cytoplasm. It catalyses the reaction L-proline + NADP(+) = (S)-1-pyrroline-5-carboxylate + NADPH + 2 H(+). The catalysed reaction is L-proline + NAD(+) = (S)-1-pyrroline-5-carboxylate + NADH + 2 H(+). It participates in amino-acid biosynthesis; L-proline biosynthesis; L-proline from L-glutamate 5-semialdehyde: step 1/1. In terms of biological role, catalyzes the reduction of 1-pyrroline-5-carboxylate (PCA) to L-proline. The polypeptide is Pyrroline-5-carboxylate reductase (Staphylococcus aureus (strain Mu50 / ATCC 700699)).